The following is an 86-amino-acid chain: Neurotoxin LmNaTx17 (86 aa).

The N-terminal stretch at 1–18 is a signal peptide; it reads MKILFVIVLAAFFIGVHC. The 67-residue stretch at 19–85 folds into the LCN-type CS-alpha/beta domain; sequence KHGYPVQYSG…TWDYKTGKCR (67 aa). 4 disulfide bridges follow: C33–C84, C37–C58, C44–C65, and C48–C67.

It belongs to the long (4 C-C) scorpion toxin superfamily. Sodium channel inhibitor family. Beta subfamily. As to expression, expressed by the venom gland.

It localises to the secreted. Functionally, binds voltage-independently at site-4 of sodium channels (Nav) and shift the voltage of activation toward more negative potentials thereby affecting sodium channel activation and promoting spontaneous and repetitive firing. This chain is Neurotoxin LmNaTx17, found in Lychas mucronatus (Chinese swimming scorpion).